The chain runs to 539 residues: M protein, serotype 24 (539 aa).

An N-terminal signal peptide occupies residues 1 to 42 (MTKNNTNRHYSLRKLKTGTASVAVALTVLGAGLVVNTNEVSA). The A-1 repeat unit spans residues 118 to 152 (LEARKADLEKALEGAMNFSTADSAKIKTLEAEKAA). The tract at residues 118 to 301 (LEARKADLEK…ALEAEKADLE (184 aa)) is 5.3 X 35 AA tandem repeats, A-type. The stretch at 153-187 (LAARKADLEKALEGAMNFSTADSAKIKTLEAEKAA) is one A-2 repeat. Residues 188 to 222 (LEARQAELEKALEGAMNFSTADSAKIKTLEAEKAA) form an A-3 repeat. Residues 223-257 (LAARKADLEKALEGAMNFSTADSAKIKTLEAEKAA) form an A-4 repeat. Residues 258 to 292 (LEARQAELEKALEGAMNFSTADSAKIKTLEAEKAA) form an A-5 repeat. The stretch at 293–297 (LEAEK) is one A-6; truncated repeat. The segment at 297 to 401 (KADLEHQSQV…REAKKQVEKA (105 aa)) is disordered. C repeat units follow at residues 298–332 (ADLEHQSQVLNANRQSLRRDLDASREAKKQLEAEH), 333–367 (QKLEEQNKISEASRQSLRRDLDASREAKKQLEAEH), and 368–402 (QKLEEQNKISEASRQSLRRDLDASREAKKQVEKAL). The segment covering 303-312 (QSQVLNANRQ) has biased composition (polar residues). Basic and acidic residues-rich tracts occupy residues 314–340 (LRRDLDASREAKKQLEAEHQKLEEQNK), 349–375 (LRRDLDASREAKKQLEAEHQKLEEQNK), and 384–401 (LRRDLDASREAKKQVEKA). D repeat units lie at residues 435 to 440 (AKLEAE), 441 to 446 (AKALKE), 449 to 454 (AKQAEE), and 456 to 461 (AKLRAG). The segment at 456–511 (AKLRAGKASDSQTPDAKPGNKAVPGKGQAPQAGTKPNQNKAPMKETKRQLPSTGET) is disordered. The LPXTG sorting signal motif lies at 505 to 509 (LPSTG). A Pentaglycyl murein peptidoglycan amidated threonine modification is found at Thr508. Positions 509 to 539 (GETANPFFTAAALTVMATAGVAAVVKRKEEN) are cleaved as a propeptide — removed by sortase.

Belongs to the M protein family.

The protein resides in the secreted. The protein localises to the cell wall. This protein is one of the different antigenic serotypes of protein M. Protein M is closely associated with virulence of the bacterium and can render the organism resistant to phagocytosis. This chain is M protein, serotype 24 (emm24), found in Streptococcus pyogenes.